We begin with the raw amino-acid sequence, 353 residues long: UPF0283 membrane protein YcjF (353 aa).

Over residues 1 to 19 the composition is skewed to basic and acidic residues; the sequence is MSEPLKPRIDFAEPLKEEP. The tract at residues 1–35 is disordered; sequence MSEPLKPRIDFAEPLKEEPTSAFKAQQTFSEAESR. A run of 3 helical transmembrane segments spans residues 70–90, 100–120, and 213–233; these read MVMG…VQWT, VALG…GSVV, and ESTL…FIAW.

This sequence belongs to the UPF0283 family.

It localises to the cell inner membrane. This is UPF0283 membrane protein YcjF from Salmonella paratyphi C (strain RKS4594).